Reading from the N-terminus, the 2293-residue chain is G-protein coupled receptor 179 (2293 aa).

Positions 1–27 (MGARAVVISSLAWGLLSCCFLCSGALG) are cleaved as a signal peptide. The interval 62–245 (FLYSGDVQRL…CHEGQLRPGW (184 aa)) is cache-like region. Residue N75 is glycosylated (N-linked (GlcNAc...) asparagine). A disulfide bridge connects residues C76 and C236. N298 is a glycosylation site (N-linked (GlcNAc...) asparagine). Transmembrane regions (helical) follow at residues 383 to 403 (AVLA…LVAY), 416 to 436 (IVLL…VFIL), 445 to 465 (CVAL…TIIL), 494 to 514 (LGQL…GALE), 544 to 564 (YIMV…CYAT), 585 to 602 (LLLS…VPSL), and 608 to 628 (LLLF…LIFI). The cysteines at positions 445 and 537 are disulfide-linked. N661 carries an N-linked (GlcNAc...) asparagine glycan. Positions 733–812 (QHSRDSGSLG…GRESLADGPP (80 aa)) are disordered. Low complexity predominate over residues 738–759 (SGSLGLGSLPGSSRRRLLSSSL). The segment covering 773–782 (STYDHHREHN) has biased composition (basic and acidic residues). N823 carries N-linked (GlcNAc...) asparagine glycosylation. 11 disordered regions span residues 872 to 935 (EERK…HPPI), 1046 to 1235 (GTGE…NPAL), 1275 to 1294 (ERTE…LSRS), 1326 to 1345 (EAVC…QLVH), 1388 to 1411 (GTST…ATFW), 1479 to 1560 (ELAG…HGGS), 1578 to 1770 (ATLS…VCPW), 1792 to 1828 (TVGK…TSKG), 1844 to 1882 (WKPP…KGEL), 1924 to 2051 (SSSH…GSEK), and 2212 to 2293 (FLPE…WDCE). Residues 1080–1089 (LKTPLQQGSV) are compositionally biased toward polar residues. 3 stretches are compositionally biased toward basic and acidic residues: residues 1105 to 1123 (TYKE…KGKP), 1173 to 1186 (CQKE…DRNK), and 1275 to 1286 (ERTEGGSLEKKP). Basic and acidic residues-rich tracts occupy residues 1546–1555 (ASSKAGEKLL) and 1597–1632 (RTSE…RIQK). The segment covering 1644–1663 (PGSTPQRDTEKAQASLQRQG) has biased composition (polar residues). Composition is skewed to basic and acidic residues over residues 1682-1698 (GEER…RPND) and 1717-1728 (KKSERLGSEKEV). Over residues 1737–1747 (PGDSSQQPDTP) the composition is skewed to polar residues. Composition is skewed to basic and acidic residues over residues 1748-1761 (NTEK…EHGS), 1796-1813 (GLER…RQNL), and 1872-1882 (ASDRASEKGEL). Over residues 1937-1948 (RVSSQPLVSTGD) the composition is skewed to polar residues. A compositionally biased stretch (basic and acidic residues) spans 1979-2007 (TETEMSRQDEKEKSQEEKERAPETRDHEG). Over residues 2283 to 2293 (SPPPDYPWDCE) the composition is skewed to pro residues.

The protein belongs to the G-protein coupled receptor 3 family. In terms of assembly, homodimer. Associates with the R7 group RGS-GNB5 complexes, composed of an R7 group RGS subunit (RGS6, RGS7, RGS9 or RGS11) and GNB5, promoting their localization to the cell membrane and regulating the GTPase activator activity of R7 RGS proteins. Interacts with TRPM1. Interacts with GRM6. Interacts with EGFLAM; transsynaptic interaction is required for synaptic organization of photoreceptor cells.

The protein localises to the cell membrane. Its subcellular location is the postsynaptic cell membrane. The protein resides in the cell projection. It localises to the dendrite. Its function is as follows. Orphan receptor involved in vision. Required for signal transduction through retinal depolarizing bipolar cells. Acts as an atypical G-protein coupled receptor that recruits and regulates the R7 group RGS-GNB5 complexes instead of activating G proteins: promotes the GTPase activator activity of R7 RGS proteins, increasing the GTPase activity of G protein alpha subunits, thereby driving them into their inactive GDP-bound form. Associates with components of metabotropic signaling cascade in retina ON-bipolar neurons, such as TRPM1 and GRM6: may control the ability of the GRM6 cascade to gate TRPM1. In Mus musculus (Mouse), this protein is G-protein coupled receptor 179.